Here is a 796-residue protein sequence, read N- to C-terminus: Probable coatomer subunit beta' (796 aa).

6 WD repeats span residues 4-42 (LDFQRKLLSHTERVKAVDFHPTEPWVIASHYNGQVGIWN), 46-84 (QTLVRSFDINDVPIRACAFIARKNWFVCGSDDFQVRVYN), 88-126 (GEKVTQFEAHPDYIRALVVHPTQPFLLTSSDDMTIKCFN), 131-170 (WKCVQTFEGHSRYVMSLAINPKDTNTFASSCLDGTVKVWS), 172-214 (GSSV…KVWD), and 218-256 (KACVRILEGHTNNVSFAFFHSKFPIIISGSEDGTVKIWH).

Belongs to the WD repeat COPB2 family. Oligomeric complex that consists of at least the alpha, beta, beta', gamma, delta, epsilon and zeta subunits.

The protein localises to the cytoplasm. Its subcellular location is the golgi apparatus membrane. It localises to the cytoplasmic vesicle. The protein resides in the COPI-coated vesicle membrane. The coatomer is a cytosolic protein complex that binds to dilysine motifs and reversibly associates with Golgi non-clathrin-coated vesicles, which further mediate biosynthetic protein transport from the ER, via the Golgi up to the trans Golgi network. Coatomer complex is required for budding from Golgi membranes, and is essential for the retrograde Golgi-to-ER transport of dilysine-tagged proteins. This chain is Probable coatomer subunit beta' (sec27), found in Schizosaccharomyces pombe (strain 972 / ATCC 24843) (Fission yeast).